The chain runs to 904 residues: Phosphoenolpyruvate carboxylase (904 aa).

Catalysis depends on residues H151 and K570.

It belongs to the PEPCase type 1 family. It depends on Mg(2+) as a cofactor.

It catalyses the reaction oxaloacetate + phosphate = phosphoenolpyruvate + hydrogencarbonate. Its function is as follows. Forms oxaloacetate, a four-carbon dicarboxylic acid source for the tricarboxylic acid cycle. The chain is Phosphoenolpyruvate carboxylase from Xanthomonas campestris pv. campestris (strain ATCC 33913 / DSM 3586 / NCPPB 528 / LMG 568 / P 25).